Here is a 90-residue protein sequence, read N- to C-terminus: MFEKKNRTCLTVYLHYNRDARKLSQYGDIVYHSKRLQYVLVYMDQELVKATILKLKKERFVKKVVPSYIKELDQNFVGNLWRDEEPSVVG.

The protein belongs to the UPF0298 family.

The protein localises to the cytoplasm. The sequence is that of UPF0298 protein SSU05_1549 from Streptococcus suis (strain 05ZYH33).